The primary structure comprises 493 residues: Probable protein phosphatase 2C 40 (493 aa).

In terms of domain architecture, PPM-type phosphatase spans 145 to 480 (LLSAMEVQVA…DDVTIMVITL (336 aa)). Residues Asp180, Gly181, Asp408, and Asp471 each contribute to the Mn(2+) site.

Belongs to the PP2C family. Requires Mg(2+) as cofactor. Mn(2+) is required as a cofactor.

The enzyme catalyses O-phospho-L-seryl-[protein] + H2O = L-seryl-[protein] + phosphate. It catalyses the reaction O-phospho-L-threonyl-[protein] + H2O = L-threonyl-[protein] + phosphate. The polypeptide is Probable protein phosphatase 2C 40 (Arabidopsis thaliana (Mouse-ear cress)).